The sequence spans 939 residues: Vacuolar membrane protease (939 aa).

The Cytoplasmic segment spans residues 1–11 (MGFNSIFKFRK). Residues 12-32 (TSLSLLLFAVYFIIGILYFID) form a helical membrane-spanning segment. Over 33-356 (KTRYKHSLPI…TFVAIPSTKL (324 aa)) the chain is Vacuolar. N-linked (GlcNAc...) asparagine glycosylation is found at Asn-59, Asn-88, and Asn-114. Zn(2+)-binding residues include His-149 and Asp-161. Residue Glu-193 is the Proton acceptor of the active site. Zn(2+) contacts are provided by Glu-194, Glu-219, and His-293. Asn-326 carries N-linked (GlcNAc...) asparagine glycosylation. The helical transmembrane segment at 357 to 377 (FWINIALLIIMPIISIFLFSI) threads the bilayer. Residues 378–388 (VKKYNNEIIDS) lie on the Cytoplasmic side of the membrane. Residues 389 to 409 (GNIWWRLPISAMSSGTIIIFT) form a helical membrane-spanning segment. The Vacuolar segment spans residues 410–424 (TKLIMKWNPYILSRN). The chain crosses the membrane as a helical span at residues 425–445 (FLLPLIGLTFEFIILNSYILT). Residues 446-453 (MFENLSSS) are Cytoplasmic-facing. A helical membrane pass occupies residues 454 to 474 (FDFKTIAINEISFLFWIVLAY). Over 475-491 (QTWKLYDNNYQNTGIYP) the chain is Vacuolar. Residues 492–512 (FTICYIVMATAGNIGYLFLIF) form a helical membrane-spanning segment. The Cytoplasmic segment spans residues 513 to 588 (KNIEIVEDEE…NQRTILKESK (76 aa)). The segment covering 540 to 552 (YRDEINGRDDSSR) has biased composition (basic and acidic residues). The tract at residues 540–561 (YRDEINGRDDSSRDSNSASIPT) is disordered. A helical membrane pass occupies residues 589–609 (LVYNYDWIIEFLLVVPFSTFL). Residues 610 to 636 (LYNSLELIMDAVNQTIQETGDLYKVYK) lie on the Vacuolar side of the membrane. An N-linked (GlcNAc...) asparagine glycan is attached at Asn-622. Residues 637-657 (ILAIGSILISIPTLPFAYKIG) traverse the membrane as a helical segment. The Cytoplasmic portion of the chain corresponds to 658-663 (CQLGKT). Residues 664–684 (LTFISIGCLLISMALAPFTEM) form a helical membrane-spanning segment. Over 685 to 939 (NPIKFRFMQV…LVKLTEAMVL (255 aa)) the chain is Vacuolar. N-linked (GlcNAc...) asparagine glycosylation is found at Asn-810 and Asn-820.

This sequence belongs to the peptidase M28 family. Requires Zn(2+) as cofactor.

It localises to the vacuole membrane. Functionally, may be involved in vacuolar sorting and osmoregulation. The protein is Vacuolar membrane protease of Vanderwaltozyma polyspora (strain ATCC 22028 / DSM 70294 / BCRC 21397 / CBS 2163 / NBRC 10782 / NRRL Y-8283 / UCD 57-17) (Kluyveromyces polysporus).